The sequence spans 427 residues: U1 small nuclear ribonucleoprotein 70 kDa (427 aa).

Disordered stretches follow at residues 82–102 and 215–427; these read EPGD…SQKR and RGRT…EYVR. Over residues 93 to 102 the composition is skewed to basic and acidic residues; sequence PEVELPSQKR. Residues 138–216 form the RRM domain; the sequence is KTLFVSRLNY…RRVLVDVERG (79 aa). A compositionally biased stretch (gly residues) spans 227–241; that stretch reads LGGGLGTSRVGGGEE. Basic and acidic residues-rich tracts occupy residues 257–402 and 409–427; these read EPSR…RYDK and RYER…EYVR. Ser282 carries the post-translational modification Phosphoserine.

Component of the spliceosome. Interacts with CYP63, U2AF35A, U2AF35B, SRZ21, RSZ22, SR34, SR45, SR45A and SCL33. Post-translationally, phosphorylated. The association and dissociation with SR45 is not affected by the phosphorylation status. Ubiquitous.

Its subcellular location is the nucleus speckle. It localises to the nucleus. It is found in the nucleoplasm. In terms of biological role, mediates the splicing of pre-mRNA by binding to the loop I region of U1-snRNA. The sequence is that of U1 small nuclear ribonucleoprotein 70 kDa (RNU1) from Arabidopsis thaliana (Mouse-ear cress).